Consider the following 235-residue polypeptide: Ubiquinone biosynthesis O-methyltransferase (235 aa).

Residues R39, G59, D80, and M124 each coordinate S-adenosyl-L-methionine.

Belongs to the methyltransferase superfamily. UbiG/COQ3 family.

The catalysed reaction is a 3-demethylubiquinol + S-adenosyl-L-methionine = a ubiquinol + S-adenosyl-L-homocysteine + H(+). It catalyses the reaction a 3-(all-trans-polyprenyl)benzene-1,2-diol + S-adenosyl-L-methionine = a 2-methoxy-6-(all-trans-polyprenyl)phenol + S-adenosyl-L-homocysteine + H(+). It functions in the pathway cofactor biosynthesis; ubiquinone biosynthesis. Its function is as follows. O-methyltransferase that catalyzes the 2 O-methylation steps in the ubiquinone biosynthetic pathway. The protein is Ubiquinone biosynthesis O-methyltransferase of Vibrio campbellii (strain ATCC BAA-1116).